The sequence spans 250 residues: Cell division protein ZapD (250 aa).

The protein belongs to the ZapD family. In terms of assembly, interacts with FtsZ.

The protein resides in the cytoplasm. In terms of biological role, cell division factor that enhances FtsZ-ring assembly. Directly interacts with FtsZ and promotes bundling of FtsZ protofilaments, with a reduction in FtsZ GTPase activity. The chain is Cell division protein ZapD from Yersinia enterocolitica serotype O:8 / biotype 1B (strain NCTC 13174 / 8081).